The chain runs to 242 residues: Ubiquinone biosynthesis O-methyltransferase (242 aa).

S-adenosyl-L-methionine contacts are provided by arginine 44, glycine 64, aspartate 85, and methionine 129.

This sequence belongs to the methyltransferase superfamily. UbiG/COQ3 family.

It catalyses the reaction a 3-demethylubiquinol + S-adenosyl-L-methionine = a ubiquinol + S-adenosyl-L-homocysteine + H(+). The enzyme catalyses a 3-(all-trans-polyprenyl)benzene-1,2-diol + S-adenosyl-L-methionine = a 2-methoxy-6-(all-trans-polyprenyl)phenol + S-adenosyl-L-homocysteine + H(+). Its pathway is cofactor biosynthesis; ubiquinone biosynthesis. Its function is as follows. O-methyltransferase that catalyzes the 2 O-methylation steps in the ubiquinone biosynthetic pathway. The chain is Ubiquinone biosynthesis O-methyltransferase from Yersinia enterocolitica serotype O:8 / biotype 1B (strain NCTC 13174 / 8081).